The primary structure comprises 130 residues: UPF0102 protein AHA_3896 (130 aa).

It belongs to the UPF0102 family.

The sequence is that of UPF0102 protein AHA_3896 from Aeromonas hydrophila subsp. hydrophila (strain ATCC 7966 / DSM 30187 / BCRC 13018 / CCUG 14551 / JCM 1027 / KCTC 2358 / NCIMB 9240 / NCTC 8049).